A 308-amino-acid chain; its full sequence is MDILPYLTKIILLSSIGITIASIIVETNLISKIKKITKPICLISNLPEECVVSLLGNFINPTVGKSMLSGFYKENKVNEKEVIVTTIISPLPTILGESVFRVQLPLAVVILGYKLGLIYVSLNVISGFLQALIGILYANIFFERRQINIDNNNNEKIVFNREVIIKGFKKSLKILKKVIPMIVIFTLLINFLIKLGLMDVVKGLFSPIFRILDLPGEAITVLIANLAHFSAGYTTVDILIKNGVLNEKQALIVLLIGNIISVTMIYLKHSIGTYISLFGRFGLKLAVINYTISVMIKILLILLLIAFF.

7 helical membrane passes run 10 to 30, 91 to 111, 115 to 135, 178 to 198, 219 to 239, 251 to 271, and 288 to 308; these read IILL…TNLI, LPTI…VVIL, LGLI…LIGI, VIPM…LGLM, ITVL…VDIL, LIVL…KHSI, and INYT…IAFF.

The protein to M.jannaschii MJ0871, MJ1556 and MJ1589.

Its subcellular location is the cell membrane. This is an uncharacterized protein from Methanocaldococcus jannaschii (strain ATCC 43067 / DSM 2661 / JAL-1 / JCM 10045 / NBRC 100440) (Methanococcus jannaschii).